A 947-amino-acid chain; its full sequence is DEAD-box ATP-dependent RNA helicase 45 (947 aa).

The span at 1-14 (MEEEEVVVVVDEEE) shows a compositional bias: acidic residues. Disordered stretches follow at residues 1–132 (MEEE…EDEI) and 159–221 (SMPA…EEFM). Basic and acidic residues-rich tracts occupy residues 15 to 31 (SERRRQKMIEEEKKRLD) and 42 to 61 (KEWQEQKRLEEEEAKRREQE). A compositionally biased stretch (low complexity) spans 62–82 (AAAGAGTPAAAAGADGDSNAG). Composition is skewed to acidic residues over residues 88–108 (DGEESDEEGYKEDSQNAEDDG) and 196–219 (DDSDSDYDDDDDDEGGSKDEDDEE). Residues 285 to 313 (KTWVQSGLTSKLLDTIKKLGFEKPMPIQA) carry the Q motif motif. Residues 316–494 (LPIIMSGRDC…RKVLTKPVEI (179 aa)) form the Helicase ATP-binding domain. Position 329–336 (329–336 (AKTGSGKT)) interacts with ATP. The DEAD box signature appears at 442–445 (DEAD). The 169-residue stretch at 479–647 (QVEILARKVL…AVPQDLKGLA (169 aa)) folds into the Helicase C-terminal domain. Positions 658 to 710 (TEQAHGTGYGGSGFKFNEEEDEARRSAKKAQAREYGYEEDKSDSDSDEEGGVR) are disordered. Acidic residues predominate over residues 697–706 (DKSDSDSDEE). The stretch at 854–879 (TELSVKKAKSELKRVLEDCANHALNL) forms a coiled coil.

This sequence belongs to the DEAD box helicase family. DDX46/PRP5 subfamily.

The catalysed reaction is ATP + H2O = ADP + phosphate + H(+). This Oryza sativa subsp. japonica (Rice) protein is DEAD-box ATP-dependent RNA helicase 45.